We begin with the raw amino-acid sequence, 242 residues long: 1-(5-phosphoribosyl)-5-[(5-phosphoribosylamino)methylideneamino] imidazole-4-carboxamide isomerase (242 aa).

Aspartate 8 acts as the Proton acceptor in catalysis. Aspartate 130 acts as the Proton donor in catalysis.

It belongs to the HisA/HisF family.

Its subcellular location is the cytoplasm. It carries out the reaction 1-(5-phospho-beta-D-ribosyl)-5-[(5-phospho-beta-D-ribosylamino)methylideneamino]imidazole-4-carboxamide = 5-[(5-phospho-1-deoxy-D-ribulos-1-ylimino)methylamino]-1-(5-phospho-beta-D-ribosyl)imidazole-4-carboxamide. The protein operates within amino-acid biosynthesis; L-histidine biosynthesis; L-histidine from 5-phospho-alpha-D-ribose 1-diphosphate: step 4/9. The protein is 1-(5-phosphoribosyl)-5-[(5-phosphoribosylamino)methylideneamino] imidazole-4-carboxamide isomerase of Thioalkalivibrio sulfidiphilus (strain HL-EbGR7).